The primary structure comprises 464 residues: Glutamate decarboxylase (464 aa).

K274 carries the N6-(pyridoxal phosphate)lysine modification.

Belongs to the group II decarboxylase family. Pyridoxal 5'-phosphate is required as a cofactor.

It catalyses the reaction L-glutamate + H(+) = 4-aminobutanoate + CO2. In terms of biological role, catalyzes the pyridoxal-dependent decarboxylation of glutamate to produce 4-aminobutanoate. Has weak activity with aspartate, but cannot complement an E.coli panD deletion mutant. This chain is Glutamate decarboxylase, found in Aliivibrio fischeri (strain ATCC 700601 / ES114) (Vibrio fischeri).